Here is a 1048-residue protein sequence, read N- to C-terminus: Probable beta-glucosidase E (1048 aa).

Positions Met-1–Ser-54 are disordered. Residues Met-1–Trp-150 lie on the Cytoplasmic side of the membrane. Residues Ser-36–Pro-47 show a composition bias toward low complexity. Residues Trp-151 to Leu-171 form a helical; Signal-anchor for type II membrane protein membrane-spanning segment. At Ala-172–Tyr-1048 the chain is on the extracellular side. N-linked (GlcNAc...) asparagine glycans are attached at residues Asn-216, Asn-224, and Asn-410. Residue Asp-438 is part of the active site. Asn-481, Asn-520, Asn-578, Asn-895, and Asn-991 each carry an N-linked (GlcNAc...) asparagine glycan. The interval Trp-508 to Asp-527 is disordered.

Belongs to the glycosyl hydrolase 3 family.

It localises to the cell membrane. The catalysed reaction is Hydrolysis of terminal, non-reducing beta-D-glucosyl residues with release of beta-D-glucose.. Its pathway is glycan metabolism; cellulose degradation. Its function is as follows. Beta-glucosidases are one of a number of cellulolytic enzymes involved in the degradation of cellulosic biomass. Catalyzes the last step releasing glucose from the inhibitory cellobiose. This is Probable beta-glucosidase E (bglE) from Aspergillus oryzae (strain ATCC 42149 / RIB 40) (Yellow koji mold).